A 289-amino-acid chain; its full sequence is Right origin-binding protein (289 aa).

An HTH araC/xylS-type domain is found at 8–106; sequence RDLLIWLEGH…AQTPALYRRS (99 aa). 2 consecutive DNA-binding regions (H-T-H motif) follow at residues 25 to 46 and 73 to 96; these read DNVA…KDVT and ILDI…KKQF.

Transcriptional regulator. Binds to the right arm of the replication origin oriC of the chromosome. Rob binding may influence the formation of the nucleoprotein structure, required for oriC function in the initiation of replication. The chain is Right origin-binding protein (rob) from Escherichia coli O157:H7.